A 993-amino-acid polypeptide reads, in one-letter code: Nisin biosynthesis protein NisB (993 aa).

Residues 838–851 form a helical membrane-spanning segment; the sequence is AIFCADSKIIPNLL.

The protein to B.subtilis SpaB and S.epidermidis EpiB.

The protein localises to the cell membrane. Involved in the post-translational modification of the lantibiotic nisin. The polypeptide is Nisin biosynthesis protein NisB (nisB) (Lactococcus lactis subsp. lactis (Streptococcus lactis)).